The sequence spans 57 residues: Large ribosomal subunit protein bL32 (57 aa).

Belongs to the bacterial ribosomal protein bL32 family.

The chain is Large ribosomal subunit protein bL32 from Geobacillus kaustophilus (strain HTA426).